Reading from the N-terminus, the 576-residue chain is Cilia- and flagella-associated protein 100 (576 aa).

The disordered stretch occupies residues 1 to 29 (MPIYDEASVPGTAAGRSTTDVGATAGANP). Coiled coils occupy residues 125-226 (IFLL…CRRY), 254-311 (VAEW…IMKE), and 342-408 (YKQL…LKDR). Disordered regions lie at residues 417-439 (TLSM…PGGP), 495-519 (AEKA…HREH), and 538-563 (TGKP…RNDE).

It belongs to the CFAP100 family. As to quaternary structure, interacts with FAP73; form the modifier of inner arm (MIA) complex.

Its subcellular location is the cytoplasm. The protein resides in the cytoskeleton. It is found in the flagellum axoneme. Its function is as follows. As part of MIA, a complex associated with the outer doublet microtubules of the axoneme, may play a role in ciliary/flagellar motility by regulating the assembly and the activity of axonemal inner dynein arm. This chain is Cilia- and flagella-associated protein 100, found in Chlamydomonas reinhardtii (Chlamydomonas smithii).